Here is a 209-residue protein sequence, read N- to C-terminus: High frequency lysogenization protein HflD homolog (209 aa).

Residues 79 to 121 (QGLNAELTRYTLSLMVLERKLNSAKGAMDTLGDRIAGLQRQLD) are a coiled coil.

It belongs to the HflD family.

The protein localises to the cytoplasm. It localises to the cell inner membrane. The polypeptide is High frequency lysogenization protein HflD homolog (Enterobacter sp. (strain 638)).